The chain runs to 70 residues: Cytochrome c oxidase subunit 8B, mitochondrial (70 aa).

Residues 1 to 24 constitute a mitochondrion transit peptide; it reads MPRLPPALRLLQPPLRCWVVPKLH. Residues 25-35 are Mitochondrial matrix-facing; sequence VSAKPARTPTS. Residues 36-59 form a helical membrane-spanning segment; it reads PAEQAVGLSMMFLSFLVPAGWVLS. Residues 60 to 70 lie on the Mitochondrial intermembrane side of the membrane; that stretch reads HLESYKKSSTA.

Belongs to the cytochrome c oxidase VIII family. In terms of assembly, component of the cytochrome c oxidase (complex IV, CIV), a multisubunit enzyme composed of 14 subunits. The complex is composed of a catalytic core of 3 subunits MT-CO1, MT-CO2 and MT-CO3, encoded in the mitochondrial DNA, and 11 supernumerary subunits COX4I, COX5A, COX5B, COX6A, COX6B, COX6C, COX7A, COX7B, COX7C, COX8 and NDUFA4, which are encoded in the nuclear genome. The complex exists as a monomer or a dimer and forms supercomplexes (SCs) in the inner mitochondrial membrane with NADH-ubiquinone oxidoreductase (complex I, CI) and ubiquinol-cytochrome c oxidoreductase (cytochrome b-c1 complex, complex III, CIII), resulting in different assemblies (supercomplex SCI(1)III(2)IV(1) and megacomplex MCI(2)III(2)IV(2)).

The protein resides in the mitochondrion inner membrane. The protein operates within energy metabolism; oxidative phosphorylation. In terms of biological role, component of the cytochrome c oxidase, the last enzyme in the mitochondrial electron transport chain which drives oxidative phosphorylation. The respiratory chain contains 3 multisubunit complexes succinate dehydrogenase (complex II, CII), ubiquinol-cytochrome c oxidoreductase (cytochrome b-c1 complex, complex III, CIII) and cytochrome c oxidase (complex IV, CIV), that cooperate to transfer electrons derived from NADH and succinate to molecular oxygen, creating an electrochemical gradient over the inner membrane that drives transmembrane transport and the ATP synthase. Cytochrome c oxidase is the component of the respiratory chain that catalyzes the reduction of oxygen to water. Electrons originating from reduced cytochrome c in the intermembrane space (IMS) are transferred via the dinuclear copper A center (CU(A)) of subunit 2 and heme A of subunit 1 to the active site in subunit 1, a binuclear center (BNC) formed by heme A3 and copper B (CU(B)). The BNC reduces molecular oxygen to 2 water molecules using 4 electrons from cytochrome c in the IMS and 4 protons from the mitochondrial matrix. In Eulemur fulvus fulvus (Brown lemur), this protein is Cytochrome c oxidase subunit 8B, mitochondrial (COX8B).